Here is a 1364-residue protein sequence, read N- to C-terminus: Formin-like protein 6 (1364 aa).

One can recognise a Phosphatase tensin-type domain in the interval 9–193 (YRKPPDGLLE…HYISRRNVSA (185 aa)). Cys-126 (phosphocysteine intermediate) is an active-site residue. Positions 199-338 (DRALTLDCVI…FRAEVLFSEM (140 aa)) constitute a C2 tensin-type domain. 3 disordered regions span residues 614 to 934 (KCTP…NLKP), 976 to 999 (VLPS…KPEK), and 1317 to 1364 (EAEA…ASAK). The segment covering 617 to 631 (PSPPPLLPPLAPVVP) has biased composition (pro residues). Polar residues predominate over residues 657–690 (SFPSLSPTQQKQSTSKLCQTILPTNHQLSSSNIT). The segment covering 734–743 (PPAPPPPPLQ) has biased composition (pro residues). The segment covering 744–757 (SPSTPRCSPVRTLA) has biased composition (low complexity). 2 stretches are compositionally biased toward pro residues: residues 774 to 813 (GPPP…PAAP) and 856 to 865 (PSPPPPPPPC). Over residues 916-929 (MSRSLQSGQAASRR) the composition is skewed to polar residues. One can recognise an FH2 domain in the interval 922–1322 (SGQAASRRSN…KALKEAEAEK (401 aa)). A compositionally biased stretch (basic and acidic residues) spans 1317-1351 (EAEAEKTKKEPENAQKTKEPGNDKAKHNNSIKELD). Residues 1353 to 1364 (SLQSPAQTASAK) are compositionally biased toward polar residues.

This sequence belongs to the formin-like family. Class-II subfamily.

This Oryza sativa subsp. japonica (Rice) protein is Formin-like protein 6 (FH6).